Reading from the N-terminus, the 357-residue chain is Phosphoribosylformylglycinamidine cyclo-ligase (357 aa).

Belongs to the AIR synthase family.

It is found in the cytoplasm. It catalyses the reaction 2-formamido-N(1)-(5-O-phospho-beta-D-ribosyl)acetamidine + ATP = 5-amino-1-(5-phospho-beta-D-ribosyl)imidazole + ADP + phosphate + H(+). Its pathway is purine metabolism; IMP biosynthesis via de novo pathway; 5-amino-1-(5-phospho-D-ribosyl)imidazole from N(2)-formyl-N(1)-(5-phospho-D-ribosyl)glycinamide: step 2/2. The chain is Phosphoribosylformylglycinamidine cyclo-ligase from Rhodopseudomonas palustris (strain BisB18).